The primary structure comprises 257 residues: Neurotrophin-3 (257 aa).

The N-terminal stretch at 1 to 18 is a signal peptide; it reads MSILFYVIFLAYLRGIQG. A propeptide spanning residues 19 to 138 is cleaved from the precursor; it reads NNMDQRSLPE…VANRTSRRKR (120 aa). Residues 61–81 form a disordered region; it reads STLPKAEAPREPERGGPAKSA. The segment covering 67 to 76 has biased composition (basic and acidic residues); it reads EAPREPERGG. An N-linked (GlcNAc...) asparagine glycan is attached at N131. Cystine bridges form between C152-C217, C195-C246, and C205-C248.

Belongs to the NGF-beta family. In terms of tissue distribution, brain and peripheral tissues.

It localises to the secreted. Functionally, seems to promote the survival of visceral and proprioceptive sensory neurons. The sequence is that of Neurotrophin-3 (NTF3) from Homo sapiens (Human).